The sequence spans 201 residues: Protein ripply1 (201 aa).

The tract at residues 1-29 is disordered; it reads MDPAASPAAAPPAAPAAAPAADPAADPAA. Residues 15–29 show a composition bias toward low complexity; it reads PAAAPAADPAADPAA. The short motif at 57–60 is the WRPW motif element; that stretch reads AYLW. The ripply homology domain stretch occupies residues 99–134; sequence HPVRLYWPKSHSFDYLYSAGEILLNNFPVQATINLY. Positions 136-174 are enriched in acidic residues; the sequence is DSDSADNEEDKEEEEEEEEEEDDEEEEEDEDKDVNENEP. A disordered region spans residues 136–201; it reads DSDSADNEED…SPDPHSACPN (66 aa).

It belongs to the ripply family. Expressed in the anterior presomitic mesoderm and somites of stage E9.5 dpc embryos. Also expressed in tongue, diaphragm and intercostal muscles at 16.5 dpc.

It is found in the nucleus. In terms of biological role, plays a role in somitogenesis. Essential for transcriptional repression of the segmental patterning genes, thus terminating the segmentation program in the presomitic mesoderm, and also required for the maintenance of rostrocaudal polarity in somites. The sequence is that of Protein ripply1 from Mus musculus (Mouse).